Reading from the N-terminus, the 603-residue chain is Probable methyltransferase PMT20 (603 aa).

The Cytoplasmic segment spans residues 1–16; sequence MKSGKQSSQPEKGTSR. A helical; Signal-anchor for type II membrane protein transmembrane segment spans residues 17–37; sequence ILSLTVLFIAFCGFSFYLGGI. At 38–603 the chain is on the lumenal side; it reads FCSERDKIVA…KLWFSSNQTS (566 aa). N313 and N600 each carry an N-linked (GlcNAc...) asparagine glycan.

The protein belongs to the methyltransferase superfamily.

It localises to the golgi apparatus membrane. The polypeptide is Probable methyltransferase PMT20 (Arabidopsis thaliana (Mouse-ear cress)).